A 167-amino-acid chain; its full sequence is Ubiquitin-fold modifier-conjugating enzyme 1 (167 aa).

Catalysis depends on Cys-116, which acts as the Glycyl thioester intermediate. Lys-122 participates in a covalent cross-link: Glycyl lysine isopeptide (Lys-Gly) (interchain with G-Cter in UFM1).

The protein belongs to the ubiquitin-conjugating enzyme family. UFC1 subfamily. Interacts with UBA5 (via C-terminus). Interacts with UFL1. Interacts with UFM1. Interacts with KIRREL3. Ufmylated at Lys-122. Deufmylated by UFSP1.

E2-like enzyme which specifically catalyzes the second step in ufmylation. Accepts the ubiquitin-like modifier UFM1 from the E1 enzyme UBA5 and forms an intermediate with UFM1 via a thioester linkage. Ufmylation is involved in various processes, such as ribosome recycling, response to DNA damage, interferon response or reticulophagy (also called ER-phagy). In Mus musculus (Mouse), this protein is Ubiquitin-fold modifier-conjugating enzyme 1.